The sequence spans 359 residues: Phosphoserine aminotransferase (359 aa).

R41 serves as a coordination point for L-glutamate. Residues 75-76 (AS), W101, T152, D171, and Q194 contribute to the pyridoxal 5'-phosphate site. K195 bears the N6-(pyridoxal phosphate)lysine mark. Position 236–237 (236–237 (NT)) interacts with pyridoxal 5'-phosphate.

This sequence belongs to the class-V pyridoxal-phosphate-dependent aminotransferase family. SerC subfamily. Homodimer. Pyridoxal 5'-phosphate is required as a cofactor.

It localises to the cytoplasm. The enzyme catalyses O-phospho-L-serine + 2-oxoglutarate = 3-phosphooxypyruvate + L-glutamate. It catalyses the reaction 4-(phosphooxy)-L-threonine + 2-oxoglutarate = (R)-3-hydroxy-2-oxo-4-phosphooxybutanoate + L-glutamate. Its pathway is amino-acid biosynthesis; L-serine biosynthesis; L-serine from 3-phospho-D-glycerate: step 2/3. The protein operates within cofactor biosynthesis; pyridoxine 5'-phosphate biosynthesis; pyridoxine 5'-phosphate from D-erythrose 4-phosphate: step 3/5. Catalyzes the reversible conversion of 3-phosphohydroxypyruvate to phosphoserine and of 3-hydroxy-2-oxo-4-phosphonooxybutanoate to phosphohydroxythreonine. This chain is Phosphoserine aminotransferase, found in Acinetobacter baumannii (strain AB307-0294).